Reading from the N-terminus, the 357-residue chain is DNA replication and repair protein RecF (357 aa).

30–37 (GANGSGKT) serves as a coordination point for ATP.

This sequence belongs to the RecF family.

It is found in the cytoplasm. In terms of biological role, the RecF protein is involved in DNA metabolism; it is required for DNA replication and normal SOS inducibility. RecF binds preferentially to single-stranded, linear DNA. It also seems to bind ATP. This is DNA replication and repair protein RecF from Escherichia coli O6:K15:H31 (strain 536 / UPEC).